Reading from the N-terminus, the 209-residue chain is Small ribosomal subunit protein uS4 (209 aa).

The region spanning 99 to 160 (RRLDNVVYRL…GSKEMTLLGQ (62 aa)) is the S4 RNA-binding domain.

This sequence belongs to the universal ribosomal protein uS4 family. As to quaternary structure, part of the 30S ribosomal subunit. Contacts protein S5. The interaction surface between S4 and S5 is involved in control of translational fidelity.

In terms of biological role, one of the primary rRNA binding proteins, it binds directly to 16S rRNA where it nucleates assembly of the body of the 30S subunit. Its function is as follows. With S5 and S12 plays an important role in translational accuracy. This Koribacter versatilis (strain Ellin345) protein is Small ribosomal subunit protein uS4.